The chain runs to 226 residues: Endonuclease NucS (226 aa).

This sequence belongs to the NucS endonuclease family.

The protein localises to the cytoplasm. Its function is as follows. Cleaves both 3' and 5' ssDNA extremities of branched DNA structures. This is Endonuclease NucS from Mycobacterium ulcerans (strain Agy99).